We begin with the raw amino-acid sequence, 957 residues long: ERC protein 2 (957 aa).

A compositionally biased stretch (polar residues) spans 1–13; it reads MYGSARTITNLEG. The interval 1–44 is disordered; that stretch reads MYGSARTITNLEGSPSRSPRLPRSPRLGHRRTSSGGGGGTGKTL. The span at 14 to 25 shows a compositional bias: low complexity; it reads SPSRSPRLPRSP. 2 positions are modified to phosphoserine: Ser65 and Ser666. Residues 140-917 adopt a coiled-coil conformation; the sequence is RQVRDSTMLD…RMKLMADNYD (778 aa). Residues 918 to 957 form a disordered region; sequence DDHHHYHHHHHHHHHRSPGRSQHSNHRPSPDQDDEEGIWA. Basic residues predominate over residues 922-943; the sequence is HYHHHHHHHHHRSPGRSQHSNH. Acidic residues predominate over residues 948–957; sequence DQDDEEGIWA.

In terms of assembly, interacts with BSN, ERC1, PPFIA1, PPFIA2, PPFIA3 and PPFIA4. Interacts through its C-terminus with the PDZ domain of RIMS1. Part of a complex consisting of ERC2, RIMS1 and UNC13A.

The protein resides in the cytoplasm. Its subcellular location is the synapse. The protein localises to the presynaptic active zone. It localises to the cytoskeleton. Functionally, thought to be involved in the organization of the cytomatrix at the nerve terminals active zone (CAZ) which regulates neurotransmitter release. Seems to act together with BSN. May recruit liprin-alpha proteins to the CAZ. This is ERC protein 2 (ERC2) from Homo sapiens (Human).